The chain runs to 217 residues: MSGLSESAQLVKQALEKRGLETPMVPNQFSREEKKEKIEHHMREILSLLELDLTDDSLEETPRRIAKMYVDEVFSGLDYQNFPKITVIENKMNVSEMVRVKEITLTSTCEHHLVTIDGKAAVAYIPRGKIIGLSKINRIVRFFAQRPQVQERMTQQILVALQTLLESDDVAVTIDATHYCVKSRGVMDATSETTTTALGGIFKSNPATRAEFLHGLR.

Zn(2+) contacts are provided by cysteine 109, histidine 112, and cysteine 180.

The protein belongs to the GTP cyclohydrolase I family. Toroid-shaped homodecamer, composed of two pentamers of five dimers.

It catalyses the reaction GTP + H2O = 7,8-dihydroneopterin 3'-triphosphate + formate + H(+). The protein operates within cofactor biosynthesis; 7,8-dihydroneopterin triphosphate biosynthesis; 7,8-dihydroneopterin triphosphate from GTP: step 1/1. The protein is GTP cyclohydrolase 1 of Vibrio vulnificus (strain CMCP6).